Here is a 105-residue protein sequence, read N- to C-terminus: Histone H2A-like 1 (105 aa).

This sequence belongs to the histone H2A family. As to quaternary structure, the nucleosome is a histone octamer containing two molecules each of H2A, H2B, H3 and H4 assembled in one H3-H4 heterotetramer and two H2A-H2B heterodimers. May be incorporated into a proportion of nucleosomes, replacing one or more H2A molecules. Interacts with H2BC1/TH2B; preferentially dimerizes with H2BC1/TH2B to form nucleosomes. In terms of tissue distribution, testis-specific.

It is found in the nucleus. The protein resides in the chromosome. In terms of biological role, atypical histone H2A which can replace conventional H2A in some nucleosomes and may play a role during spermatogenesis. Nucleosomes wrap and compact DNA into chromatin, limiting DNA accessibility to the cellular machineries which require DNA as a template. Histones thereby play a central role in transcription regulation, DNA repair, DNA replication and chromosomal stability. DNA accessibility is regulated via a complex set of post-translational modifications of histones, also called histone code, and nucleosome remodeling. The protein is Histone H2A-like 1 of Mus musculus (Mouse).